A 298-amino-acid polypeptide reads, in one-letter code: Transcription factor SRM1 (298 aa).

One can recognise an SANT domain in the interval 7 to 62 (SDGSVWSREDDIAFERALANNTDESEERWEKIAADVPGKSVEQIKEHYELLVEDVT). Residues 68–118 (CVPLPAYGSPEGSNGHAGDEGASSKKGGNSHAGESNQAGKSKSDQERRKGI) form a disordered region. A compositionally biased stretch (basic and acidic residues) spans 108–118 (SKSDQERRKGI). The 58-residue stretch at 111–168 (DQERRKGIAWTEDEHRLFLLGLDKYGKGDWRSISRNFVVTRTPTQVASHAQKYFIRLN) folds into the HTH myb-type domain. A DNA-binding region (H-T-H motif) is located at residues 140 to 164 (WRSISRNFVVTRTPTQVASHAQKYF). Positions 182–200 (ITSVGNADVSTPQGPITGQ) are enriched in polar residues. Residues 182–245 (ITSVGNADVS…GPPMYGTPAI (64 aa)) are disordered. Positions 201–215 (NNSNNNNNNNNNNSS) are enriched in low complexity.

In terms of tissue distribution, expressed in young seedlings, developing leaves, sepals and trichomes.

Its subcellular location is the nucleus. In terms of biological role, transcription activator that coordinates abscisic acid (ABA) biosynthesis and signaling-related genes via binding to the specific promoter motif 5'-(A/T)AACCAT-3'. Represses ABA-mediated salt (e.g. NaCl and KCl) stress tolerance. Regulates leaf shape and promotes vegetative growth. The chain is Transcription factor SRM1 from Arabidopsis thaliana (Mouse-ear cress).